The chain runs to 193 residues: Pyridoxal 5'-phosphate synthase subunit PdxT (193 aa).

L-glutamine is bound at residue 52-54 (GES). The active-site Nucleophile is the Cys-84. L-glutamine contacts are provided by residues Arg-111 and 139–140 (IR). Active-site charge relay system residues include His-176 and Glu-178.

This sequence belongs to the glutaminase PdxT/SNO family. As to quaternary structure, in the presence of PdxS, forms a dodecamer of heterodimers. Only shows activity in the heterodimer.

The enzyme catalyses aldehydo-D-ribose 5-phosphate + D-glyceraldehyde 3-phosphate + L-glutamine = pyridoxal 5'-phosphate + L-glutamate + phosphate + 3 H2O + H(+). It carries out the reaction L-glutamine + H2O = L-glutamate + NH4(+). Its pathway is cofactor biosynthesis; pyridoxal 5'-phosphate biosynthesis. Its function is as follows. Catalyzes the hydrolysis of glutamine to glutamate and ammonia as part of the biosynthesis of pyridoxal 5'-phosphate. The resulting ammonia molecule is channeled to the active site of PdxS. The protein is Pyridoxal 5'-phosphate synthase subunit PdxT of Pasteurella multocida (strain Pm70).